The sequence spans 671 residues: Solute carrier family 5 member 4 (671 aa).

The Cytoplasmic portion of the chain corresponds to 1–38 (MPAMGTALPRAMASTASVSTSTGSSELSSLSDNINNPA). A helical transmembrane segment spans residues 39–59 (DISVIVIYFVVVMAVGVWAMV). The Extracellular segment spans residues 60–65 (KTNRST). The helical transmembrane segment at 66–86 (VGGFFLAGRSMTWWPMGASLF) threads the bilayer. Topologically, residues 87–89 (ASN) are cytoplasmic. A helical membrane pass occupies residues 90–110 (IGSGHFVGLAGTGAATGIAVT). Residues 111–116 (AFESHS) are Extracellular-facing. A helical transmembrane segment spans residues 117-137 (FALLLVLGWFFVPIYIKAGVM). Residues 138–159 (TMPEYLRKRFGGKRLQIYLSVL) are Cytoplasmic-facing. The helical transmembrane segment at 160-180 (SLFICVILTISADIFSGAIFI) threads the bilayer. Residue K181 is a topological domain, extracellular. A helical transmembrane segment spans residues 182–202 (LALGLDLYLAIFILLAITAVF). Residues 203–218 (TITGGLASVIYTDTLQ) are Cytoplasmic-facing. The chain crosses the membrane as a helical span at residues 219 to 239 (AIIMLVGSFILMIYAFVEVGG). Topologically, residues 240–288 (YESFTEKYMNAIPSVVEGDNLTISPKCYTPQPDSFHIFRDAVTGDIPWP) are extracellular. Residues 289-309 (GTAFGMPITALWYWCINQVIV) traverse the membrane as a helical segment. The Cytoplasmic segment spans residues 310 to 324 (QRCLCGKNMSHVKAA). The helical transmembrane segment at 325–345 (CIVCGYLKLLPIFFMVMPGMI) threads the bilayer. Residues 346–378 (SRILYTDMVACVVPSECVKQCGVDVGCTNYAYP) lie on the Extracellular side of the membrane. Residues 379-399 (MLVLKLMPMGLRGLMLSVMLA) form a helical membrane-spanning segment. Residues 400–434 (SLMSSLTSIFNSASTLFTMDLYTKIRKKASERELL) are Cytoplasmic-facing. The helical transmembrane segment at 435-455 (IAGRLFVSVLIVTSILWVPIV) threads the bilayer. Residues 456-467 (EVSQGGQLIHYT) are Extracellular-facing. A helical membrane pass occupies residues 468–488 (EAISSYLGPPIAAVFLVAIFC). Residues 489–494 (KRVNEQ) are Cytoplasmic-facing. A helical transmembrane segment spans residues 495–515 (GAFWGLMVGLVLGLIRMIAEF). Over 516 to 537 (SYGTGSCLAPSSCPKVICGVHY) the chain is Extracellular. A helical membrane pass occupies residues 538–558 (LYYAIILFFVSILVILGVSYL). Residues 559 to 650 (TKPIPDVHLY…DTSEKPFWRT (92 aa)) are Cytoplasmic-facing. A compositionally biased stretch (acidic residues) spans 583-593 (DLDAEDREENE). Residues 583-604 (DLDAEDREENEADARTEEDQTE) form a disordered region. The segment covering 594–604 (ADARTEEDQTE) has biased composition (basic and acidic residues). A helical membrane pass occupies residues 651–671 (VVNVNVIVLLAVAAFFYGYFA).

The protein belongs to the sodium:solute symporter (SSF) (TC 2.A.21) family.

The protein resides in the cell membrane. Functionally, generates D-glucose-induced depolarization in a pH-dependent and Na(+)-independent manner, with activity in acidic conditions (pH 5) but not neutral conditions. This Rattus norvegicus (Rat) protein is Solute carrier family 5 member 4.